The sequence spans 244 residues: Phosphoadenosine 5'-phosphosulfate reductase (244 aa).

C239 serves as the catalytic Nucleophile; cysteine thiosulfonate intermediate.

This sequence belongs to the PAPS reductase family. CysH subfamily.

The protein resides in the cytoplasm. It catalyses the reaction [thioredoxin]-disulfide + sulfite + adenosine 3',5'-bisphosphate + 2 H(+) = [thioredoxin]-dithiol + 3'-phosphoadenylyl sulfate. It functions in the pathway sulfur metabolism; hydrogen sulfide biosynthesis; sulfite from sulfate: step 3/3. Catalyzes the formation of sulfite from phosphoadenosine 5'-phosphosulfate (PAPS) using thioredoxin as an electron donor. This is Phosphoadenosine 5'-phosphosulfate reductase from Escherichia coli (strain K12 / MC4100 / BW2952).